We begin with the raw amino-acid sequence, 144 residues long: Maximins 7/H1 (144 aa).

An N-terminal signal peptide occupies residues 1 to 18; sequence MNFKYIVAVSFLIASAYA. The propeptide occupies 19–43; it reads RSEENDEQSLSQRDVLEEESLREIR. An Asparagine amide modification is found at Asn-70. A propeptide spanning residues 74–123 is cleaved from the precursor; it reads TAEDHEVMKRLEAVMRDLDSLDYPEEAAERETRGFNQEEIANLFTKKEKR. Position 143 is a leucine amide (Leu-143).

The protein belongs to the bombinin family. As to expression, expressed by the skin glands.

The protein resides in the secreted. Maximin-7 shows antimicrobial activity against bacteria and against the fungus C.albicans. It has little hemolytic activity. Functionally, maximin-H1 shows antibacterial activity against both Gram-positive and Gram-negative bacteria. It also shows antimicrobial activity against the fungus C.albicans. Shows strong hemolytic activity. This chain is Maximins 7/H1, found in Bombina maxima (Giant fire-bellied toad).